A 607-amino-acid chain; its full sequence is UvrABC system protein C (607 aa).

Residues 15–92 (SQPGSYQMKD…IKRYRPYFNI (78 aa)) form the GIY-YIG domain. In terms of domain architecture, UVR spans 197–232 (GKAISDIKKKMKRASDSTEYELAADFRDRLKFIDQT).

It belongs to the UvrC family. As to quaternary structure, interacts with UvrB in an incision complex.

The protein localises to the cytoplasm. The UvrABC repair system catalyzes the recognition and processing of DNA lesions. UvrC both incises the 5' and 3' sides of the lesion. The N-terminal half is responsible for the 3' incision and the C-terminal half is responsible for the 5' incision. The sequence is that of UvrABC system protein C from Oenococcus oeni (strain ATCC BAA-331 / PSU-1).